The sequence spans 190 residues: Superoxide dismutase [Cu-Zn] (190 aa).

Positions 1 to 23 (MKLTNLALAFTLFGASAVAFAHA) are cleaved as a signal peptide. Cu cation contacts are provided by H83, H85, and H108. A disulfide bridge links C90 with C186. Positions 108, 117, 126, and 129 each coordinate Zn(2+). The segment at 162–181 (MIHEGGDNHSDHPAPLGGGG) is disordered. H164 contributes to the Cu cation binding site.

The protein belongs to the Cu-Zn superoxide dismutase family. As to quaternary structure, homodimer. Requires Cu cation as cofactor. Zn(2+) serves as cofactor.

It is found in the periplasm. The catalysed reaction is 2 superoxide + 2 H(+) = H2O2 + O2. Its function is as follows. Destroys radicals which are normally produced within the cells and which are toxic to biological systems. This is Superoxide dismutase [Cu-Zn] (sodC) from Actinobacillus pleuropneumoniae (Haemophilus pleuropneumoniae).